The following is a 387-amino-acid chain: Succinate--CoA ligase [ADP-forming] subunit beta (387 aa).

One can recognise an ATP-grasp domain in the interval 9–244 (KEVLRKFGVA…LNEEEPSEIE (236 aa)). ATP contacts are provided by residues Lys46, 53–55 (GRG), Glu99, Cys102, and Glu107. 2 residues coordinate Mg(2+): Asn199 and Asp213. Substrate is bound by residues Asn264 and 321 to 323 (GIM).

It belongs to the succinate/malate CoA ligase beta subunit family. Heterotetramer of two alpha and two beta subunits. Mg(2+) is required as a cofactor.

The enzyme catalyses succinate + ATP + CoA = succinyl-CoA + ADP + phosphate. It carries out the reaction GTP + succinate + CoA = succinyl-CoA + GDP + phosphate. It functions in the pathway carbohydrate metabolism; tricarboxylic acid cycle; succinate from succinyl-CoA (ligase route): step 1/1. Succinyl-CoA synthetase functions in the citric acid cycle (TCA), coupling the hydrolysis of succinyl-CoA to the synthesis of either ATP or GTP and thus represents the only step of substrate-level phosphorylation in the TCA. The beta subunit provides nucleotide specificity of the enzyme and binds the substrate succinate, while the binding sites for coenzyme A and phosphate are found in the alpha subunit. This chain is Succinate--CoA ligase [ADP-forming] subunit beta, found in Bdellovibrio bacteriovorus (strain ATCC 15356 / DSM 50701 / NCIMB 9529 / HD100).